A 123-amino-acid chain; its full sequence is 13 kDa major membrane protein (123 aa).

Its subcellular location is the cell membrane. The protein is 13 kDa major membrane protein of Francisella tularensis subsp. holarctica (strain LVS).